Consider the following 156-residue polypeptide: MSESAERKSILDVVGIQELLPHRPPFLLVDRVVEFEAHRRLVALKGVTMNEPFFQGHFPAQPVMPGVLILEALAQAAALLATMSLKPDEVKDKITYLMGIDGARFRRPVVPGDRLELEVEVTKQKGAVWKQTGVARVDGQVVAEAEFMAMLADRER.

The active site involves His-57.

This sequence belongs to the thioester dehydratase family. FabZ subfamily.

The protein localises to the cytoplasm. It catalyses the reaction a (3R)-hydroxyacyl-[ACP] = a (2E)-enoyl-[ACP] + H2O. Its function is as follows. Involved in unsaturated fatty acids biosynthesis. Catalyzes the dehydration of short chain beta-hydroxyacyl-ACPs and long chain saturated and unsaturated beta-hydroxyacyl-ACPs. The polypeptide is 3-hydroxyacyl-[acyl-carrier-protein] dehydratase FabZ (Anaeromyxobacter dehalogenans (strain 2CP-C)).